The chain runs to 143 residues: MIRKSKKITKLRGSRTCGYGAAKKHRGAGHKGGKGLAGVTKHRWIHTVKYMPDHIGKYGFKRHSSLIKELKVINLGQLDEIVSKNKESFEIVDGKIVIDITTLDYEKVLGKGKITCPMIIKAVEFSESAKEKIESAGGEFVEL.

Belongs to the universal ribosomal protein uL15 family. Part of the 50S ribosomal subunit.

Binds to the 23S rRNA. The polypeptide is Large ribosomal subunit protein uL15 (Methanococcus aeolicus (strain ATCC BAA-1280 / DSM 17508 / OCM 812 / Nankai-3)).